A 423-amino-acid chain; its full sequence is O-methyltransferase aoiF (423 aa).

Position 273 (Asp273) interacts with S-adenosyl-L-methionine. His324 serves as the catalytic Proton acceptor.

This sequence belongs to the class I-like SAM-binding methyltransferase superfamily. Cation-independent O-methyltransferase family.

It functions in the pathway secondary metabolite biosynthesis. In terms of biological role, O-methyltransferase; part of the gene cluster that mediates the biosynthesis of a methylated derivative of known natural products orthosporin and diaporthin. Within the pathway, aoiF catalyzes the biotransformation of orthosporin to diaporthin but also of diaporthin to the final product, by performing a tandem methylation of the polyketide core. Orthosporin is produced by an oxidoreductase that has still to be identified and that catalyzes the stereospecific reduction of the carbonyl moiety of the hexaketide isocoumarin scaffold produced by the non-reducing polyketide synthase aoiG to generate the S-configured secondary alcohol at C-11. In Aspergillus oryzae (strain ATCC 42149 / RIB 40) (Yellow koji mold), this protein is O-methyltransferase aoiF.